We begin with the raw amino-acid sequence, 119 residues long: Ribonuclease P protein component (119 aa).

The protein belongs to the RnpA family. Consists of a catalytic RNA component (M1 or rnpB) and a protein subunit.

The catalysed reaction is Endonucleolytic cleavage of RNA, removing 5'-extranucleotides from tRNA precursor.. In terms of biological role, RNaseP catalyzes the removal of the 5'-leader sequence from pre-tRNA to produce the mature 5'-terminus. It can also cleave other RNA substrates such as 4.5S RNA. The protein component plays an auxiliary but essential role in vivo by binding to the 5'-leader sequence and broadening the substrate specificity of the ribozyme. The polypeptide is Ribonuclease P protein component (Halalkalibacterium halodurans (strain ATCC BAA-125 / DSM 18197 / FERM 7344 / JCM 9153 / C-125) (Bacillus halodurans)).